Here is a 441-residue protein sequence, read N- to C-terminus: MSEISRQEFQRRRQALVEQMQPGSAALIFAAPEVTRSADSEYPYRQNSDFWYFTGFNEPEAVLVLIKSDDTHNHSVLFNRVRDLTAEIWFGRRLGQDAAPEKLGVDRALAFSEINQQLYQLLNGLDVVYHAQGEYAYADVIVNSALEKLRKGSRQNLTAPATMIDWRPVVHEMRLFKSPEEIAVLRRAGEITAMAHTRAMEKCRPGMFEYHLEGEIHHEFNRHGARYPSYNTIVGSGENGCILHYTENECEMRDGDLVLIDAGCEYKGYAGDITRTFPVNGKFTQAQREIYDIVLESLETSLRLYRPGTSILEVTGEVVRIMVSGLVKLGILKGDVDELIAQNAHRPFFMHGLSHWLGLDVHDVGVYGQDRSRILEPGMVLTVEPGLYIAPDAEVPEQYRGIGIRIEDDIVITETGNENLTASVVKKPEEIEALMVAARKQ.

Mn(2+)-binding residues include D261, D272, H355, E384, and E407.

The protein belongs to the peptidase M24B family. Homotetramer. Mn(2+) serves as cofactor.

It localises to the cytoplasm. The catalysed reaction is Release of any N-terminal amino acid, including proline, that is linked to proline, even from a dipeptide or tripeptide.. The chain is Xaa-Pro aminopeptidase (pepP) from Escherichia coli (strain K12).